The primary structure comprises 330 residues: DNA-directed RNA polymerase subunit alpha (330 aa).

The alpha N-terminal domain (alpha-NTD) stretch occupies residues M1 to K235. The tract at residues I270–K330 is alpha C-terminal domain (alpha-CTD).

The protein belongs to the RNA polymerase alpha chain family. As to quaternary structure, in plastids the minimal PEP RNA polymerase catalytic core is composed of four subunits: alpha, beta, beta', and beta''. When a (nuclear-encoded) sigma factor is associated with the core the holoenzyme is formed, which can initiate transcription.

It is found in the plastid. The protein localises to the chloroplast. It catalyses the reaction RNA(n) + a ribonucleoside 5'-triphosphate = RNA(n+1) + diphosphate. Its function is as follows. DNA-dependent RNA polymerase catalyzes the transcription of DNA into RNA using the four ribonucleoside triphosphates as substrates. The protein is DNA-directed RNA polymerase subunit alpha (rpoA) of Gossypium barbadense (Sea Island cotton).